The chain runs to 116 residues: MQAKEEKEFTLQERRCLIVWVYTLKPLKQLRRYGLIHYVSRKMKYVVIYMNEENIESNMEKINQLHFVRSVDKSYRPDVEMNFAEKIGTKAAYQEQEDDGYVVEELSTEIRLAENV.

This sequence belongs to the UPF0298 family.

It localises to the cytoplasm. This is UPF0298 protein EF_2453 from Enterococcus faecalis (strain ATCC 700802 / V583).